The primary structure comprises 435 residues: Transforming growth factor beta-2 proprotein (435 aa).

The first 20 residues, 1 to 20 (MHYCVLSAFLLLHLVTVALS), serve as a signal peptide directing secretion. Residues Asn-72, Asn-140, and Asn-241 are each glycosylated (N-linked (GlcNAc...) asparagine). 4 disulfide bridges follow: Cys-309/Cys-318, Cys-317/Cys-380, Cys-346/Cys-411, and Cys-350/Cys-413.

This sequence belongs to the TGF-beta family. Interacts with the serine proteases, HTRA1 and HTRA3. Interacts with ASPN. Interacts with MFAP5. As to quaternary structure, interacts with Transforming growth factor beta-2 (TGF-beta-2) chain; interaction is non-covalent and maintains (TGF-beta-2) in a latent state. Interacts with LRRC32/GARP; leading to regulate activation of TGF-beta-2. Interacts with NREP; the interaction results in a decrease in TGFB2 autoinduction. In terms of assembly, transforming growth factor beta-2: Homodimer; disulfide-linked. Transforming growth factor beta-2: Interacts with TGF-beta receptors (TGFBR1 and TGFBR2), leading to signal transduction. In terms of processing, the precursor proprotein is cleaved in the Golgi apparatus to form Transforming growth factor beta-2 (TGF-beta-2) and Latency-associated peptide (LAP) chains, which remain non-covalently linked, rendering TGF-beta-2 inactive.

Its subcellular location is the secreted. The protein localises to the extracellular space. The protein resides in the extracellular matrix. Precursor of the Latency-associated peptide (LAP) and Transforming growth factor beta-2 (TGF-beta-2) chains, which constitute the regulatory and active subunit of TGF-beta-2, respectively. In terms of biological role, required to maintain the Transforming growth factor beta-2 (TGF-beta-2) chain in a latent state during storage in extracellular matrix. Associates non-covalently with TGF-beta-2 and regulates its activation via interaction with 'milieu molecules', such as LTBP1 and LRRC32/GARP, that control activation of TGF-beta-2. Its function is as follows. Multifunctional protein that regulates various processes such as angiogenesis and heart development. Activation into mature form follows different steps: following cleavage of the proprotein in the Golgi apparatus, Latency-associated peptide (LAP) and Transforming growth factor beta-2 (TGF-beta-2) chains remain non-covalently linked rendering TGF-beta-2 inactive during storage in extracellular matrix. At the same time, LAP chain interacts with 'milieu molecules', such as LTBP1 and LRRC32/GARP, that control activation of TGF-beta-2 and maintain it in a latent state during storage in extracellular milieus. Once activated following release of LAP, TGF-beta-2 acts by binding to TGF-beta receptors (TGFBR1 and TGFBR2), which transduce signal. The chain is Transforming growth factor beta-2 proprotein (TGFB2) from Sus scrofa (Pig).